A 691-amino-acid chain; its full sequence is DNA ligase (691 aa).

NAD(+) contacts are provided by residues 41-45 (DAEYD), 90-91 (SL), and E130. The N6-AMP-lysine intermediate role is filled by K132. NAD(+)-binding residues include R153, E190, K307, and K331. The Zn(2+) site is built by C425, C428, C443, and C449. The 82-residue stretch at 610 to 691 (APQGVLAGKT…MHTLLEGHAR (82 aa)) folds into the BRCT domain.

It belongs to the NAD-dependent DNA ligase family. LigA subfamily. Requires Mg(2+) as cofactor. Mn(2+) is required as a cofactor.

It carries out the reaction NAD(+) + (deoxyribonucleotide)n-3'-hydroxyl + 5'-phospho-(deoxyribonucleotide)m = (deoxyribonucleotide)n+m + AMP + beta-nicotinamide D-nucleotide.. DNA ligase that catalyzes the formation of phosphodiester linkages between 5'-phosphoryl and 3'-hydroxyl groups in double-stranded DNA using NAD as a coenzyme and as the energy source for the reaction. It is essential for DNA replication and repair of damaged DNA. This is DNA ligase from Burkholderia pseudomallei (strain 1710b).